The sequence spans 456 residues: tRNA modification GTPase MnmE (456 aa).

(6S)-5-formyl-5,6,7,8-tetrahydrofolate is bound by residues R23, E85, and R124. One can recognise a TrmE-type G domain in the interval 220 to 375 (GLRVLIFGKP…LVSAIQERFV (156 aa)). N230 is a binding site for K(+). Residues 230-235 (NVGKSS), 249-255 (TDIPGTT), and 274-277 (DTAG) each bind GTP. S234 is a binding site for Mg(2+). Residues T249, I251, and T254 each contribute to the K(+) site. T255 provides a ligand contact to Mg(2+). A (6S)-5-formyl-5,6,7,8-tetrahydrofolate-binding site is contributed by K456.

Belongs to the TRAFAC class TrmE-Era-EngA-EngB-Septin-like GTPase superfamily. TrmE GTPase family. In terms of assembly, homodimer. Heterotetramer of two MnmE and two MnmG subunits. It depends on K(+) as a cofactor.

The protein resides in the cytoplasm. Its function is as follows. Exhibits a very high intrinsic GTPase hydrolysis rate. Involved in the addition of a carboxymethylaminomethyl (cmnm) group at the wobble position (U34) of certain tRNAs, forming tRNA-cmnm(5)s(2)U34. This chain is tRNA modification GTPase MnmE, found in Syntrophotalea carbinolica (strain DSM 2380 / NBRC 103641 / GraBd1) (Pelobacter carbinolicus).